The sequence spans 505 residues: Argininosuccinate lyase (505 aa).

It belongs to the lyase 1 family. Argininosuccinate lyase subfamily.

The protein localises to the cytoplasm. The catalysed reaction is 2-(N(omega)-L-arginino)succinate = fumarate + L-arginine. It functions in the pathway amino-acid biosynthesis; L-arginine biosynthesis; L-arginine from L-ornithine and carbamoyl phosphate: step 3/3. The polypeptide is Argininosuccinate lyase (Rhodococcoides fascians (Rhodococcus fascians)).